A 578-amino-acid chain; its full sequence is MVRNVDDLDFHLPSHAQDMLDGLQRLRSQPKLADVTLLVGGRELPCHRGLLALSSPYFHAMFAGDFAESFSARVELRDVEPAVVGQLVDFVYTGRLTITQGNVEALTRTAARLHFPSVQKVCGRYLQQQLDAANCLGICEFGEQQGLLGVAAKAWAFLRENFEAVAREDEFLQLPRERLVTCLAGDLLQVQPEQSRLEALMRWVRHDPQARAAHLPELLSLVHLDAVPRPCVQQLLASEPLIQESEACRAALSQGHDGAPLALQQKLEEVLVVVGGQALEEEEAGEEPTPGLGNFAFYNSKAKRWMALPDFPDYHKWGFSLAALNNNIYVTGGSRGTKTDTWSTTQAWCFPLKEASWKPVAPMLKPRTNHASAALNGEIYVIGGTTLDVVEVESYDPYTDSWTPVSPALKYVSNFSAAGCRGRLYLVGSSACKYNALALQCYNPVTDAWSVIASPFLPKYLSSPRCAALHGELYLIGDNTKKVYVYDPGANLWQKVQSQHSLHENGALVPLGDALYVTGGRWQGMEGDYHVEMEAYDTVRDTWTRHGALPRLWLYHGASTVFLDVSKWTQPSGPTQEH.

In terms of domain architecture, BTB spans 33-100; it reads ADVTLLVGGR…VYTGRLTITQ (68 aa). The region spanning 153–255 is the BACK domain; sequence KAWAFLRENF…EACRAALSQG (103 aa). 6 Kelch repeats span residues 270-326, 327-377, 378-422, 424-471, 473-513, and 514-563; these read VLVV…ALNN, NIYV…ALNG, EIYV…GCRG, LYLV…ALHG, LYLI…PLGD, and ALYV…TVFL.

The chain is Kelch-like protein 30 (KLHL30) from Homo sapiens (Human).